The following is a 345-amino-acid chain: Proto-oncogene serine/threonine-protein kinase mos (345 aa).

In terms of domain architecture, Protein kinase spans 63-344; the sequence is VCLLQRLGAG…LDLRALQAEL (282 aa). ATP contacts are provided by residues 69 to 77 and K90; that span reads LGAGGFGSV. Residue D202 is the Proton acceptor of the active site.

It belongs to the protein kinase superfamily. Ser/Thr protein kinase family. In terms of assembly, interacts with MAP2K1/MEK1. As to expression, restricted to gonadal tissues.

It is found in the cytoplasm. It carries out the reaction L-seryl-[protein] + ATP = O-phospho-L-seryl-[protein] + ADP + H(+). It catalyses the reaction L-threonyl-[protein] + ATP = O-phospho-L-threonyl-[protein] + ADP + H(+). Functionally, serine/threonine kinase involved in the regulation of MAPK signaling. Is an activator of the ERK1/2 signaling cascade playing an essential role in the stimulation of oocyte maturation. In Sus scrofa (Pig), this protein is Proto-oncogene serine/threonine-protein kinase mos.